The sequence spans 164 residues: MVLKTELCRFSGQKIYPGRGIRFIRSDSQVFLFLNSKCKRYFHNKLKPSKLCWTAMYRKQHKKDAAQEAVKRRRRATKKPYSRSIVGATLEVIQKKRAEKPEVRDAAREAALREIKERIKKTKDEKKAKKVEYASKQQKSQVKGNIPKSAAPKAAKMGGGGGRR.

Residues 117–133 (ERIKKTKDEKKAKKVEY) show a composition bias toward basic and acidic residues. Residues 117–164 (ERIKKTKDEKKAKKVEYASKQQKSQVKGNIPKSAAPKAAKMGGGGGRR) are disordered.

This sequence belongs to the eukaryotic ribosomal protein eL24 family. In terms of assembly, interacts with the cauliflower mosaic virus transactivator TAV to form a TAV/60S complex. Interacts with REIL1 AND REIL2.

Might have an extraribosomal function in reinitiation of translation. The polypeptide is Large ribosomal subunit protein eL24z (RPL24A) (Arabidopsis thaliana (Mouse-ear cress)).